A 410-amino-acid chain; its full sequence is D-amino acid dehydrogenase (410 aa).

Position 9–14 (9–14 (GGGIVG)) interacts with FAD.

Belongs to the DadA oxidoreductase family. The cofactor is FAD.

It is found in the cell inner membrane. The catalysed reaction is a D-alpha-amino acid + a quinone + H2O = a 2-oxocarboxylate + a quinol + NH4(+). In terms of biological role, catalyzes the oxidative deamination of D-amino acids. Has broad substrate specificity; is mostly active on D-proline, and to a lesser extent, on several other D-amino acids such as D-alanine, D-phenylalanine and D-serine. Mediates electron transport from D-proline to coenzyme Q1 in vitro, and is involved in the electron transport chain from D-proline to the c-type cytochrome in vivo. This Helicobacter pylori (strain ATCC 700392 / 26695) (Campylobacter pylori) protein is D-amino acid dehydrogenase.